The chain runs to 216 residues: Peptide methionine sulfoxide reductase MsrA (216 aa).

Residue Cys-57 is part of the active site.

Belongs to the MsrA Met sulfoxide reductase family.

The catalysed reaction is L-methionyl-[protein] + [thioredoxin]-disulfide + H2O = L-methionyl-(S)-S-oxide-[protein] + [thioredoxin]-dithiol. It carries out the reaction [thioredoxin]-disulfide + L-methionine + H2O = L-methionine (S)-S-oxide + [thioredoxin]-dithiol. Its function is as follows. Has an important function as a repair enzyme for proteins that have been inactivated by oxidation. Catalyzes the reversible oxidation-reduction of methionine sulfoxide in proteins to methionine. The chain is Peptide methionine sulfoxide reductase MsrA from Agrobacterium fabrum (strain C58 / ATCC 33970) (Agrobacterium tumefaciens (strain C58)).